The following is a 237-amino-acid chain: N-alpha-acetyltransferase 40 (237 aa).

Glycine 2 carries N-myristoyl glycine lipidation. An N-acetyltransferase domain is found at 63–216 (TALSPDTVEW…EDCSYEILSR (154 aa)). Residues tyrosine 85, 127–129 (DVE), and tyrosine 138 contribute to the substrate site. Acetyl-CoA contacts are provided by residues 140–142 (VQL) and 148–153 (RKGLGK). Threonine 174 is a substrate binding site. Asparagine 179 provides a ligand contact to acetyl-CoA. Tyrosine 211 serves as a coordination point for substrate.

The protein belongs to the acetyltransferase family. NAA40 subfamily.

The protein resides in the cytoplasm. It localises to the nucleus. The catalysed reaction is N-terminal L-seryl-[histone H4] + acetyl-CoA = N-terminal N(alpha)-acetyl-L-seryl-[histone H4] + CoA + H(+). It catalyses the reaction N-terminal L-seryl-[histone H2A] + acetyl-CoA = N-terminal N(alpha)-acetyl-L-seryl-[histone H2A] + CoA + H(+). Its function is as follows. N-alpha-acetyltransferase that specifically mediates the acetylation of the N-terminal residues of histones H4 and H2A. In contrast to other N-alpha-acetyltransferase, has a very specific selectivity for histones H4 and H2A N-terminus and specifically recognizes the 'Ser-Gly-Arg-Gly sequence'. This chain is N-alpha-acetyltransferase 40 (naa40), found in Danio rerio (Zebrafish).